Consider the following 418-residue polypeptide: Glutamyl-tRNA reductase (418 aa).

Substrate is bound by residues 49 to 52 (TCNR), Ser-108, 113 to 115 (EPQ), and Gln-119. Cys-50 functions as the Nucleophile in the catalytic mechanism. 188 to 193 (GAGETI) is a binding site for NADP(+).

The protein belongs to the glutamyl-tRNA reductase family. Homodimer.

It catalyses the reaction (S)-4-amino-5-oxopentanoate + tRNA(Glu) + NADP(+) = L-glutamyl-tRNA(Glu) + NADPH + H(+). It participates in porphyrin-containing compound metabolism; protoporphyrin-IX biosynthesis; 5-aminolevulinate from L-glutamyl-tRNA(Glu): step 1/2. Functionally, catalyzes the NADPH-dependent reduction of glutamyl-tRNA(Glu) to glutamate 1-semialdehyde (GSA). The protein is Glutamyl-tRNA reductase of Aliivibrio fischeri (strain MJ11) (Vibrio fischeri).